We begin with the raw amino-acid sequence, 110 residues long: MSPRKTYILKLYVAGNTPNSMRALKTLRNILETEFLGVYALKVIDVLKQPQLAEEDKILATPTLAKILPPPVRRIIGDLSDRERVLIGLDLLYEELSDDSNAQVLDDFSE.

The protein belongs to the KaiB family. The KaiABC complex composition changes during the circadian cycle to control KaiC phosphorylation. Complexes KaiC(6), KaiA(2-4):KaiC(6), KaiB(6):KaiC(6) and KaiC(6):KaiB(6):KaiA(12) are among the most important forms, many form cooperatively. Undergoes a major conformational rearrangment; in the free state forms homotetramers as a dimer of dimers. When bound to the CI domain of KaiC switches to a monomeric thioredoxin-fold (KaiB(fs)). KaiB(fs) binds CikA, leading it to dephosphorylate phospho-RpaA.

Key component of the KaiABC oscillator complex, which constitutes the main circadian regulator in cyanobacteria. Complex composition changes during the circadian cycle to control KaiC phosphorylation. KaiA stimulates KaiC autophosphorylation, while KaiB sequesters KaiA, leading to KaiC autodephosphorylation. Phospho-Ser-431 KaiC accumulation triggers binding of KaiB to form the KaiB(6):KaiC(6) complex, leading to changes in output regulators CikA and SasA. KaiB switches to a thioredoxin-like fold (KaiB(fs)) when bound to KaiC. KaiB(6):KaiC(6) formation exposes a site for KaiA binding that sequesters KaiA from KaiC, making the KaiC(6):KaiB(6):KaiA(12) complex that results in KaiC autodephosphorylation. In terms of biological role, a metamorphic protein which reversibly switches between an inactive tetrameric fold and a rare, thioredoxin-like monomeric fold (KaiB(fs)). KaiB(fs) binds phospho-KaiC, KaiA and CikA. KaiA and CikA compete for binding to KaiB(fs), and KaiB(fs) and SasA compete for binding to KaiC, thus the clock oscillator and output signal pathway are tightly coupled. This is Circadian clock oscillator protein KaiB from Synechococcus sp. (strain RCC307).